A 265-amino-acid polypeptide reads, in one-letter code: Ribosomal RNA small subunit methyltransferase G (265 aa).

S-adenosyl-L-methionine contacts are provided by G75, L80, and R145. Positions 212–265 (RAVRSSQRTRAESRGGRGDGERHDGRQVRRTSRDSLRSREVGRDQPTRGQSRST) are disordered. The segment covering 220–257 (TRAESRGGRGDGERHDGRQVRRTSRDSLRSREVGRDQP) has biased composition (basic and acidic residues).

Belongs to the methyltransferase superfamily. RNA methyltransferase RsmG family.

It localises to the cytoplasm. Functionally, specifically methylates the N7 position of guanine in position 518 of 16S rRNA. This Frankia casuarinae (strain DSM 45818 / CECT 9043 / HFP020203 / CcI3) protein is Ribosomal RNA small subunit methyltransferase G.